The chain runs to 144 residues: Deoxyuridine 5'-triphosphate nucleotidohydrolase (144 aa).

Substrate-binding positions include 63–65, N76, and 80–82; these read RSG and TID.

It belongs to the dUTPase family. It depends on Mg(2+) as a cofactor.

The catalysed reaction is dUTP + H2O = dUMP + diphosphate + H(+). It functions in the pathway pyrimidine metabolism; dUMP biosynthesis; dUMP from dCTP (dUTP route): step 2/2. This enzyme is involved in nucleotide metabolism: it produces dUMP, the immediate precursor of thymidine nucleotides and it decreases the intracellular concentration of dUTP so that uracil cannot be incorporated into DNA. This is Deoxyuridine 5'-triphosphate nucleotidohydrolase from Alkaliphilus metalliredigens (strain QYMF).